The sequence spans 360 residues: Tryptophan--tRNA ligase, mitochondrial (360 aa).

ATP contacts are provided by residues Gln-38 and 44-47 (HLGN). Residues 39 to 47 (PTGIPHLGN) carry the 'HIGH' region motif. Asp-168 provides a ligand contact to L-tryptophan. ATP-binding positions include 180 to 182 (GED) and 229 to 233 (KMSKS). The span at 220–230 (IRSLREPEKKM) shows a compositional bias: basic and acidic residues. Residues 220–241 (IRSLREPEKKMSKSSGGPRSRI) are disordered. The 'KMSKS' region motif lies at 229–233 (KMSKS).

The protein belongs to the class-I aminoacyl-tRNA synthetase family.

The protein resides in the mitochondrion matrix. The enzyme catalyses tRNA(Trp) + L-tryptophan + ATP = L-tryptophyl-tRNA(Trp) + AMP + diphosphate + H(+). Functionally, catalyzes the attachment of tryptophan to tRNA(Trp). The sequence is that of Tryptophan--tRNA ligase, mitochondrial from Caenorhabditis elegans.